We begin with the raw amino-acid sequence, 135 residues long: ATP synthase epsilon chain (135 aa).

Positions 84 to 107 (SLSEEKQSEEQKQRLERAKKALSS) are disordered. Residues 86–102 (SEEKQSEEQKQRLERAK) show a composition bias toward basic and acidic residues.

This sequence belongs to the ATPase epsilon chain family. In terms of assembly, F-type ATPases have 2 components, CF(1) - the catalytic core - and CF(0) - the membrane proton channel. CF(1) has five subunits: alpha(3), beta(3), gamma(1), delta(1), epsilon(1). CF(0) has three main subunits: a, b and c.

Its subcellular location is the cell membrane. Functionally, produces ATP from ADP in the presence of a proton gradient across the membrane. The protein is ATP synthase epsilon chain of Elusimicrobium minutum (strain Pei191).